The following is a 334-amino-acid chain: N-acetyl-gamma-glutamyl-phosphate reductase (334 aa).

Cys-154 is a catalytic residue.

It belongs to the NAGSA dehydrogenase family. Type 1 subfamily.

The protein resides in the cytoplasm. The catalysed reaction is N-acetyl-L-glutamate 5-semialdehyde + phosphate + NADP(+) = N-acetyl-L-glutamyl 5-phosphate + NADPH + H(+). The protein operates within amino-acid biosynthesis; L-arginine biosynthesis; N(2)-acetyl-L-ornithine from L-glutamate: step 3/4. Its function is as follows. Catalyzes the NADPH-dependent reduction of N-acetyl-5-glutamyl phosphate to yield N-acetyl-L-glutamate 5-semialdehyde. This is N-acetyl-gamma-glutamyl-phosphate reductase from Salmonella typhi.